The primary structure comprises 306 residues: Triplex capsid protein 2 (306 aa).

This sequence belongs to the herpesviridae TRX2 protein family. In terms of assembly, interacts with TRX1 and major capisd protein/MCP.

The protein resides in the virion. Its subcellular location is the host nucleus. In terms of biological role, structural component of the T=16 icosahedral capsid. The capsid is composed of pentamers and hexamers of major capsid protein/MCP, which are linked together by heterotrimers called triplexes. These triplexes are formed by a single molecule of triplex protein 1/TRX1 and two copies of triplex protein 2/TRX2. Additionally, TRX1 is required for efficient transport of TRX2 to the nucleus, which is the site of capsid assembly. The protein is Triplex capsid protein 2 of Human cytomegalovirus (strain AD169) (HHV-5).